The sequence spans 238 residues: Sugar fermentation stimulation protein homolog (238 aa).

It belongs to the SfsA family.

This is Sugar fermentation stimulation protein homolog from Klebsiella pneumoniae (strain 342).